The chain runs to 471 residues: 7-hydroxymethyl chlorophyll a reductase, chloroplastic (471 aa).

The N-terminal 44 residues, 1–44 (MARCISFLSTSSSLPCATKPPCCSVSSVLPSSPSSHQCRGRKTS), are a transit peptide targeting the chloroplast.

Belongs to the FrhB family. FAD serves as cofactor. The cofactor is iron-sulfur cluster.

Its subcellular location is the plastid. The protein localises to the chloroplast. The catalysed reaction is chlorophyll a + 2 oxidized [2Fe-2S]-[ferredoxin] + H2O = 7(1)-hydroxychlorophyll a + 2 reduced [2Fe-2S]-[ferredoxin] + 2 H(+). Probable iron-sulfur flavoprotein that converts 7-hydroxymethyl chlorophyll a to chlorophyll a using ferredoxin as a reducing equivalent. Catalyzes the reduction of a hydroxymethyl group to a methyl group. In Oryza sativa subsp. japonica (Rice), this protein is 7-hydroxymethyl chlorophyll a reductase, chloroplastic (HCAR).